The sequence spans 828 residues: Putative dual specificity tyrosine-phosphorylation-regulated kinase 3 homolog (828 aa).

Basic and acidic residues predominate over residues 1–14 (MVGSQEKKNNHIEL). The segment at 1–26 (MVGSQEKKNNHIELSETPATDKNNLN) is disordered. Over residues 17 to 26 (TPATDKNNLN) the composition is skewed to polar residues. A Protein kinase domain is found at 276 to 589 (YEMLKIIGKG…PSEALKHPWL (314 aa)). Residues 282–290 (IGKGSFGQV) and Lys-305 each bind ATP. The active-site Proton acceptor is Asp-402. Phosphoserine is present on Ser-616.

The protein belongs to the protein kinase superfamily. CMGC Ser/Thr protein kinase family. MNB/DYRK subfamily. Autophosphorylated on tyrosine residues.

The enzyme catalyses L-seryl-[protein] + ATP = O-phospho-L-seryl-[protein] + ADP + H(+). The catalysed reaction is L-threonyl-[protein] + ATP = O-phospho-L-threonyl-[protein] + ADP + H(+). It carries out the reaction L-tyrosyl-[protein] + ATP = O-phospho-L-tyrosyl-[protein] + ADP + H(+). The polypeptide is Putative dual specificity tyrosine-phosphorylation-regulated kinase 3 homolog (Dyrk3) (Drosophila melanogaster (Fruit fly)).